The chain runs to 167 residues: UPF0178 protein bll3966 (167 aa).

This sequence belongs to the UPF0178 family.

In Bradyrhizobium diazoefficiens (strain JCM 10833 / BCRC 13528 / IAM 13628 / NBRC 14792 / USDA 110), this protein is UPF0178 protein bll3966.